The sequence spans 158 residues: SsrA-binding protein (158 aa).

This sequence belongs to the SmpB family.

It is found in the cytoplasm. Functionally, required for rescue of stalled ribosomes mediated by trans-translation. Binds to transfer-messenger RNA (tmRNA), required for stable association of tmRNA with ribosomes. tmRNA and SmpB together mimic tRNA shape, replacing the anticodon stem-loop with SmpB. tmRNA is encoded by the ssrA gene; the 2 termini fold to resemble tRNA(Ala) and it encodes a 'tag peptide', a short internal open reading frame. During trans-translation Ala-aminoacylated tmRNA acts like a tRNA, entering the A-site of stalled ribosomes, displacing the stalled mRNA. The ribosome then switches to translate the ORF on the tmRNA; the nascent peptide is terminated with the 'tag peptide' encoded by the tmRNA and targeted for degradation. The ribosome is freed to recommence translation, which seems to be the essential function of trans-translation. In Bartonella quintana (strain Toulouse) (Rochalimaea quintana), this protein is SsrA-binding protein.